A 143-amino-acid chain; its full sequence is Large ribosomal subunit protein uL11 (143 aa).

Belongs to the universal ribosomal protein uL11 family. In terms of assembly, part of the ribosomal stalk of the 50S ribosomal subunit. Interacts with L10 and the large rRNA to form the base of the stalk. L10 forms an elongated spine to which L12 dimers bind in a sequential fashion forming a multimeric L10(L12)X complex. One or more lysine residues are methylated.

Its function is as follows. Forms part of the ribosomal stalk which helps the ribosome interact with GTP-bound translation factors. In Psychrobacter sp. (strain PRwf-1), this protein is Large ribosomal subunit protein uL11.